The chain runs to 347 residues: Phenylalanine--tRNA ligase alpha subunit (347 aa).

A Mg(2+)-binding site is contributed by Glu-261.

The protein belongs to the class-II aminoacyl-tRNA synthetase family. Phe-tRNA synthetase alpha subunit type 1 subfamily. Tetramer of two alpha and two beta subunits. The cofactor is Mg(2+).

The protein resides in the cytoplasm. The enzyme catalyses tRNA(Phe) + L-phenylalanine + ATP = L-phenylalanyl-tRNA(Phe) + AMP + diphosphate + H(+). The protein is Phenylalanine--tRNA ligase alpha subunit of Streptococcus mutans serotype c (strain ATCC 700610 / UA159).